A 298-amino-acid chain; its full sequence is Acetylglutamate kinase (298 aa).

Substrate-binding positions include 69 to 70 (GG), Arg-91, and Asn-196.

Belongs to the acetylglutamate kinase family. ArgB subfamily.

It is found in the cytoplasm. It catalyses the reaction N-acetyl-L-glutamate + ATP = N-acetyl-L-glutamyl 5-phosphate + ADP. The protein operates within amino-acid biosynthesis; L-arginine biosynthesis; N(2)-acetyl-L-ornithine from L-glutamate: step 2/4. Catalyzes the ATP-dependent phosphorylation of N-acetyl-L-glutamate. This is Acetylglutamate kinase from Rhodopseudomonas palustris (strain ATCC BAA-98 / CGA009).